The chain runs to 1838 residues: Nuclear pore complex protein NUP205 (1838 aa).

Belongs to the NUP186/NUP192/NUP205 family. As to quaternary structure, part of the nuclear pore complex (NPC). The NPC has an eight-fold symmetrical structure comprising a central transport channel and two rings, the cytoplasmic and nuclear rings, to which eight filaments are attached. The cytoplasmic filaments have loose ends, while the nuclear filaments are joined in a distal ring, forming a nuclear basket. NPCs are highly dynamic in configuration and composition, and can be devided in 3 subcomplexes, the NUP62 subcomplex, the NUP107-160 subcomplex and the NUP93 subcomplex, containing approximately 30 different nucleoporin proteins.

Its subcellular location is the nucleus envelope. It localises to the nucleus. The protein resides in the nuclear pore complex. This is Nuclear pore complex protein NUP205 from Arabidopsis thaliana (Mouse-ear cress).